Reading from the N-terminus, the 339-residue chain is Adenosine deaminase (339 aa).

2 residues coordinate Zn(2+): histidine 15 and histidine 17. Residues histidine 17, aspartate 19, and glycine 172 each coordinate substrate. Histidine 199 contributes to the Zn(2+) binding site. Catalysis depends on glutamate 202, which acts as the Proton donor. Aspartate 279 lines the Zn(2+) pocket.

Belongs to the metallo-dependent hydrolases superfamily. Adenosine and AMP deaminases family. Adenosine deaminase subfamily. It depends on Zn(2+) as a cofactor.

It catalyses the reaction adenosine + H2O + H(+) = inosine + NH4(+). The catalysed reaction is 2'-deoxyadenosine + H2O + H(+) = 2'-deoxyinosine + NH4(+). Catalyzes the hydrolytic deamination of adenosine and 2-deoxyadenosine. In Lacticaseibacillus casei (strain BL23) (Lactobacillus casei), this protein is Adenosine deaminase.